We begin with the raw amino-acid sequence, 316 residues long: Lipoyl synthase (316 aa).

[4Fe-4S] cluster-binding residues include Cys66, Cys71, Cys77, Cys92, Cys96, Cys99, and Ser306. A Radical SAM core domain is found at 78–295; the sequence is FNRGTATFMI…NLIAFDLGFK (218 aa).

The protein belongs to the radical SAM superfamily. Lipoyl synthase family. [4Fe-4S] cluster serves as cofactor.

It localises to the cytoplasm. The catalysed reaction is [[Fe-S] cluster scaffold protein carrying a second [4Fe-4S](2+) cluster] + N(6)-octanoyl-L-lysyl-[protein] + 2 oxidized [2Fe-2S]-[ferredoxin] + 2 S-adenosyl-L-methionine + 4 H(+) = [[Fe-S] cluster scaffold protein] + N(6)-[(R)-dihydrolipoyl]-L-lysyl-[protein] + 4 Fe(3+) + 2 hydrogen sulfide + 2 5'-deoxyadenosine + 2 L-methionine + 2 reduced [2Fe-2S]-[ferredoxin]. The protein operates within protein modification; protein lipoylation via endogenous pathway; protein N(6)-(lipoyl)lysine from octanoyl-[acyl-carrier-protein]: step 2/2. Catalyzes the radical-mediated insertion of two sulfur atoms into the C-6 and C-8 positions of the octanoyl moiety bound to the lipoyl domains of lipoate-dependent enzymes, thereby converting the octanoylated domains into lipoylated derivatives. The polypeptide is Lipoyl synthase (Wigglesworthia glossinidia brevipalpis).